A 390-amino-acid chain; its full sequence is Mevalonate kinase (390 aa).

Residues K16, S130, and 135–141 (GAGLGSS) contribute to the ATP site. The Mg(2+) site is built by S141 and E193. Catalysis depends on D204, which acts as the Proton acceptor.

It belongs to the GHMP kinase family. Mevalonate kinase subfamily. Requires Mg(2+) as cofactor.

The protein resides in the cytoplasm. It catalyses the reaction (R)-mevalonate + ATP = (R)-5-phosphomevalonate + ADP + H(+). The protein operates within isoprenoid biosynthesis; isopentenyl diphosphate biosynthesis via mevalonate pathway; isopentenyl diphosphate from (R)-mevalonate: step 1/3. Catalyzes the phosphorylation of mevalonate to mevalonate 5-phosphate, a key step in isoprenoid biosynthesis. This chain is Mevalonate kinase, found in Dictyostelium discoideum (Social amoeba).